Here is a 473-residue protein sequence, read N- to C-terminus: L-seryl-tRNA(Sec) selenium transferase (473 aa).

Lys302 is subject to N6-(pyridoxal phosphate)lysine.

The protein belongs to the SelA family. Requires pyridoxal 5'-phosphate as cofactor.

It localises to the cytoplasm. The catalysed reaction is L-seryl-tRNA(Sec) + selenophosphate + H(+) = L-selenocysteinyl-tRNA(Sec) + phosphate. The protein operates within aminoacyl-tRNA biosynthesis; selenocysteinyl-tRNA(Sec) biosynthesis; selenocysteinyl-tRNA(Sec) from L-seryl-tRNA(Sec) (bacterial route): step 1/1. Converts seryl-tRNA(Sec) to selenocysteinyl-tRNA(Sec) required for selenoprotein biosynthesis. This is L-seryl-tRNA(Sec) selenium transferase from Shewanella oneidensis (strain ATCC 700550 / JCM 31522 / CIP 106686 / LMG 19005 / NCIMB 14063 / MR-1).